A 160-amino-acid polypeptide reads, in one-letter code: Large ribosomal subunit protein uL16 (160 aa).

The protein belongs to the universal ribosomal protein uL16 family. In terms of assembly, part of the 50S ribosomal subunit.

Binds 23S rRNA and is also seen to make contacts with the A and possibly P site tRNAs. The sequence is that of Large ribosomal subunit protein uL16 from Prochlorococcus marinus (strain MIT 9301).